We begin with the raw amino-acid sequence, 326 residues long: UDP-N-acetylglucosamine transporter (326 aa).

The next 8 helical transmembrane spans lie at 4–24, 38–58, 136–156, 174–194, 212–232, 243–263, 269–289, and 293–313; these read NLKYLSLGILVFQTTSLVLTM, LSSTAVVVAEFLKIMACIFLV, LGVYQWLSLVILMAGVAFVQW, FVGLMAVLTACFSSGFAGVYF, LGFFGSIFGLMGVYVYDGELV, QLTWIVVALQALGGLVIAAVI, ILKGFATSLSIILSTIISYFW, and FVPTSVFFLGAILVIAATFLY.

Belongs to the nucleotide-sugar transporter family. SLC35A subfamily. In terms of assembly, interacts with SLC35A2; the interaction is reduced in the presence of SLC35A4. Found in a complex with SLC35A2 and SLC35A4. Interacts with MGAT4B. O-Glcnacylation regulates the stability of SLC35A3 and the specific complex formation with MGAT4B.

It localises to the golgi apparatus membrane. The enzyme catalyses UMP(out) + UDP-N-acetyl-alpha-D-glucosamine(in) = UMP(in) + UDP-N-acetyl-alpha-D-glucosamine(out). Transports diphosphate-N-acetylglucosamine (UDP-GlcNAc) from the cytosol into the lumen of the Golgi apparatus, functioning as an antiporter that exchanges UDP-N-acetyl-alpha-D-glucosamine for UMP. May supply UDP-GlcNAc as substrate for Golgi-resident glycosyltransferases that generate highly branched, multiantennary complex N-glycans and keratan sulfate. However, the exact role of SLC35A3 still needs to be elucidated, it could be a member of a catalytically more efficient multiprotein complex rather than function independently as a single transporter. This chain is UDP-N-acetylglucosamine transporter (Slc35a3), found in Mus musculus (Mouse).